The primary structure comprises 458 residues: UDP-N-acetylmuramoylalanine--D-glutamate ligase (458 aa).

Residue 124-130 coordinates ATP; it reads GSDGKTT.

The protein belongs to the MurCDEF family.

It is found in the cytoplasm. The catalysed reaction is UDP-N-acetyl-alpha-D-muramoyl-L-alanine + D-glutamate + ATP = UDP-N-acetyl-alpha-D-muramoyl-L-alanyl-D-glutamate + ADP + phosphate + H(+). Its pathway is cell wall biogenesis; peptidoglycan biosynthesis. Cell wall formation. Catalyzes the addition of glutamate to the nucleotide precursor UDP-N-acetylmuramoyl-L-alanine (UMA). This Clostridium botulinum (strain Loch Maree / Type A3) protein is UDP-N-acetylmuramoylalanine--D-glutamate ligase.